The following is a 122-amino-acid chain: Histone H2B.2 (122 aa).

Residues 1-10 (MAPKKAPAAT) show a composition bias toward low complexity. Residues 1–28 (MAPKKAPAATTEKKVKKAPTTEKKNKKK) are disordered. Ala-2 carries the n,N,N-trimethylalanine modification. An N6-acetyllysine mark is found at Lys-5 and Lys-42. Lys-116 participates in a covalent cross-link: Glycyl lysine isopeptide (Lys-Gly) (interchain with G-Cter in ubiquitin).

It belongs to the histone H2B family. As to quaternary structure, the nucleosome is a histone octamer containing two molecules each of H2A, H2B, H3 and H4 assembled in one H3-H4 heterotetramer and two H2A-H2B heterodimers. The octamer wraps approximately 147 bp of DNA. Acetylation occurs almost exclusively in the MAC. Post-translationally, monoubiquitination to form H2BK115ub1 gives a specific tag for epigenetic transcriptional activation and is also prerequisite for H3K4me and H3K79me formation.

It is found in the nucleus. The protein localises to the chromosome. Functionally, core component of nucleosome. Nucleosomes wrap and compact DNA into chromatin, limiting DNA accessibility to the cellular machineries which require DNA as a template. Histones thereby play a central role in transcription regulation, DNA repair, DNA replication and chromosomal stability. DNA accessibility is regulated via a complex set of post-translational modifications of histones, also called histone code, and nucleosome remodeling. The polypeptide is Histone H2B.2 (HTB2) (Tetrahymena thermophila (strain SB210)).